The chain runs to 99 residues: MQAQVMKTKCNVFYGIIKNRTPRVVIPISKINYRQIPGIFSKYSSRGFAIGVTSDISPVLLGKATDFSLFLSFGNTETVFSLRLRSTFSNLPRLPIMTF.

The protein resides in the mitochondrion. This is an uncharacterized protein from Marchantia polymorpha (Common liverwort).